The primary structure comprises 219 residues: uncharacterized protein (219 aa).

One can recognise an ACT domain in the interval 4–79; it reads GLRIIAENKI…YIIEIEEEES (76 aa).

This is an uncharacterized protein from Archaeoglobus fulgidus (strain ATCC 49558 / DSM 4304 / JCM 9628 / NBRC 100126 / VC-16).